The following is a 415-amino-acid chain: Serine hydroxymethyltransferase (415 aa).

Residues L117 and 121–123 each bind (6S)-5,6,7,8-tetrahydrofolate; that span reads GHL. At K226 the chain carries N6-(pyridoxal phosphate)lysine. (6S)-5,6,7,8-tetrahydrofolate contacts are provided by residues E241 and 349–351; that span reads SPF.

This sequence belongs to the SHMT family. As to quaternary structure, homodimer. Pyridoxal 5'-phosphate serves as cofactor.

It localises to the cytoplasm. The catalysed reaction is (6R)-5,10-methylene-5,6,7,8-tetrahydrofolate + glycine + H2O = (6S)-5,6,7,8-tetrahydrofolate + L-serine. It functions in the pathway one-carbon metabolism; tetrahydrofolate interconversion. Its pathway is amino-acid biosynthesis; glycine biosynthesis; glycine from L-serine: step 1/1. Its function is as follows. Catalyzes the reversible interconversion of serine and glycine with tetrahydrofolate (THF) serving as the one-carbon carrier. This reaction serves as the major source of one-carbon groups required for the biosynthesis of purines, thymidylate, methionine, and other important biomolecules. Also exhibits THF-independent aldolase activity toward beta-hydroxyamino acids, producing glycine and aldehydes, via a retro-aldol mechanism. The protein is Serine hydroxymethyltransferase of Geobacter sulfurreducens (strain ATCC 51573 / DSM 12127 / PCA).